The chain runs to 296 residues: Glycine--tRNA ligase alpha subunit (296 aa).

The protein belongs to the class-II aminoacyl-tRNA synthetase family. In terms of assembly, tetramer of two alpha and two beta subunits.

The protein resides in the cytoplasm. It carries out the reaction tRNA(Gly) + glycine + ATP = glycyl-tRNA(Gly) + AMP + diphosphate. The polypeptide is Glycine--tRNA ligase alpha subunit (Desulfitobacterium hafniense (strain Y51)).